A 308-amino-acid chain; its full sequence is Cytochrome b (308 aa).

The next 4 membrane-spanning stretches (helical) occupy residues 1–21 (FGSL…LMAM), 45–66 (WLIR…YLHI), 81–101 (WNTG…GYVL), and 146–166 (FFAL…IHLT). The heme b site is built by histidine 51 and histidine 65. Positions 150 and 164 each coordinate heme b. Position 169 (histidine 169) interacts with a ubiquinone. 3 consecutive transmembrane segments (helical) span residues 194–214 (TKDI…AMFS), 256–276 (LGGV…PFLH), and 288–308 (LSQL…WVGS).

Belongs to the cytochrome b family. In terms of assembly, the cytochrome bc1 complex contains 11 subunits: 3 respiratory subunits (MT-CYB, CYC1 and UQCRFS1), 2 core proteins (UQCRC1 and UQCRC2) and 6 low-molecular weight proteins (UQCRH/QCR6, UQCRB/QCR7, UQCRQ/QCR8, UQCR10/QCR9, UQCR11/QCR10 and a cleavage product of UQCRFS1). This cytochrome bc1 complex then forms a dimer. Heme b is required as a cofactor.

It is found in the mitochondrion inner membrane. In terms of biological role, component of the ubiquinol-cytochrome c reductase complex (complex III or cytochrome b-c1 complex) that is part of the mitochondrial respiratory chain. The b-c1 complex mediates electron transfer from ubiquinol to cytochrome c. Contributes to the generation of a proton gradient across the mitochondrial membrane that is then used for ATP synthesis. The protein is Cytochrome b (MT-CYB) of Asthenes dorbignyi (Creamy-breasted canastero).